Reading from the N-terminus, the 108-residue chain is Circadian clock oscillator protein KaiB (108 aa).

The protein belongs to the KaiB family. In terms of assembly, may undergo a major conformational rearrangment; in the free state forms homooligomers. When bound to KaiC switches to a monomeric thioredoxin-fold (KaiB(fs)). The active oscillator complex is probably KaiC(6):KaiB(6).

Component of the KaiBC clock protein complex, which constitutes the main circadian regulator in cyanobacteria; it may modify the ATPase activity of KaiC. In terms of biological role, may be a metamorphic protein which reversibly switches between an inactive tetrameric fold and a rare, thioredoxin-like monomeric fold (KaiB(fs)). KaiB(fs) binds phospho-KaiC, and perhaps clock output effectors. This chain is Circadian clock oscillator protein KaiB, found in Prochlorococcus marinus (strain MIT 9515).